Reading from the N-terminus, the 269-residue chain is Tryptophan synthase alpha chain (269 aa).

Catalysis depends on proton acceptor residues E49 and D60.

Belongs to the TrpA family. In terms of assembly, tetramer of two alpha and two beta chains.

The enzyme catalyses (1S,2R)-1-C-(indol-3-yl)glycerol 3-phosphate + L-serine = D-glyceraldehyde 3-phosphate + L-tryptophan + H2O. It functions in the pathway amino-acid biosynthesis; L-tryptophan biosynthesis; L-tryptophan from chorismate: step 5/5. The alpha subunit is responsible for the aldol cleavage of indoleglycerol phosphate to indole and glyceraldehyde 3-phosphate. This is Tryptophan synthase alpha chain from Pseudomonas entomophila (strain L48).